Consider the following 491-residue polypeptide: La-related protein 6 (491 aa).

A disordered region spans residues Met-1 to Pro-87. Ala-2 is subject to N-acetylalanine. Acidic residues predominate over residues Glu-24 to Gly-37. A phosphoserine mark is found at Ser-56 and Ser-58. An HTH La-type RNA-binding domain is found at Lys-86–Pro-177. The 113-residue stretch at Lys-184–Pro-296 folds into the RRM domain. The Nuclear export signal motif lies at Leu-186–Leu-193. Disordered stretches follow at residues Met-293–Arg-403 and Ser-423–Val-491. The Nuclear localization signal motif lies at Pro-296–Lys-302. Low complexity predominate over residues Asp-332 to Pro-346. Composition is skewed to polar residues over residues Asn-359–Leu-386 and Gln-444–Leu-453. In terms of domain architecture, SUZ-C spans Pro-427 to Glu-485. Residues His-482–Val-491 are compositionally biased toward basic and acidic residues.

Interacts (via the HTH domain) with VIM/vimentin. Interacts (via C-terminus) with non-muscle myosin MYH10. Interacts (via C-terminus) with DHX9. Expressed in numerous tissues.

It localises to the cytoplasm. The protein localises to the nucleus. Regulates the coordinated translation of type I collagen alpha-1 and alpha-2 mRNAs, CO1A1 and CO1A2. Stabilizes mRNAs through high-affinity binding of a stem-loop structure in their 5' UTR. This regulation requires VIM and MYH10 filaments, and the helicase DHX9. This is La-related protein 6 (LARP6) from Homo sapiens (Human).